A 264-amino-acid chain; its full sequence is MKAYLDLLSHVLNNGTDRSDRTGVGTRSVFGYQMRFNLQEGFPLLTTKKLHLRSIIYELLWFLKGDTNIAWLKEHGVSIWDEWADKDGNLGPVYGYQWRSWPSSDGRYIDQISNLLAMINHNPNSRRLIVTAWNPALIDEMALPPCHCLFQFQVANGKLSCQLYQRSADIFLGVPFNIASYALLTMMIAQVTGLKVGDFIHTLGDAHLYSNHFEQAKQQLSRTPGILPLIRINPKVTDLFSFQFEDFELLNYEAQPHIKAPVAV.

Arg-21 serves as a coordination point for dUMP. His-51 is a binding site for (6R)-5,10-methylene-5,6,7,8-tetrahydrofolate. 126 to 127 (RR) contributes to the dUMP binding site. Catalysis depends on Cys-146, which acts as the Nucleophile. DUMP-binding positions include 166–169 (RSAD), Asn-177, and 207–209 (HLY). Residue Asp-169 coordinates (6R)-5,10-methylene-5,6,7,8-tetrahydrofolate. A (6R)-5,10-methylene-5,6,7,8-tetrahydrofolate-binding site is contributed by Ala-263.

It belongs to the thymidylate synthase family. Bacterial-type ThyA subfamily. In terms of assembly, homodimer.

It is found in the cytoplasm. The catalysed reaction is dUMP + (6R)-5,10-methylene-5,6,7,8-tetrahydrofolate = 7,8-dihydrofolate + dTMP. The protein operates within pyrimidine metabolism; dTTP biosynthesis. Functionally, catalyzes the reductive methylation of 2'-deoxyuridine-5'-monophosphate (dUMP) to 2'-deoxythymidine-5'-monophosphate (dTMP) while utilizing 5,10-methylenetetrahydrofolate (mTHF) as the methyl donor and reductant in the reaction, yielding dihydrofolate (DHF) as a by-product. This enzymatic reaction provides an intracellular de novo source of dTMP, an essential precursor for DNA biosynthesis. The sequence is that of Thymidylate synthase from Bartonella bacilliformis (strain ATCC 35685 / KC583 / Herrer 020/F12,63).